The chain runs to 484 residues: uncharacterized protein (484 aa).

12 consecutive transmembrane segments (helical) span residues 19 to 39, 78 to 98, 111 to 131, 134 to 154, 165 to 185, 199 to 219, 249 to 269, 289 to 309, 321 to 341, 360 to 380, 398 to 418, and 440 to 460; these read LSFG…MIFV, VNWG…WLIV, FFML…FIIL, IFAI…SNYL, FSPF…AGII, IVFL…IILG, TWYW…PFTF, ISVF…TIGL, ISTI…VFVL, LFLF…GVML, FGLI…ITSL, and LGAY…LALL.

It localises to the cell membrane. This is an uncharacterized protein from Mesomycoplasma hyopneumoniae (strain 232) (Mycoplasma hyopneumoniae).